The chain runs to 396 residues: Putative N(4)-(beta-N-acetylglucosaminyl)-L-asparaginase GE19290 (396 aa).

The first 23 residues, 1 to 23 (MKRHLKACLWVLCFASTALSSLA), serve as a signal peptide directing secretion. Disulfide bonds link Cys-100–Cys-105 and Cys-199–Cys-215. The Nucleophile role is filled by Thr-246. Residues 274–277 (RVGD) and 297–300 (TGDG) each bind substrate. Cys-357 and Cys-384 form a disulfide bridge.

It belongs to the Ntn-hydrolase family. Heterotetramer of two alpha and two beta chains arranged as a dimer of alpha/beta heterodimers. Cleaved into an alpha and beta chain by autocatalysis; this activates the enzyme. The N-terminal residue of the beta subunit is responsible for the nucleophile hydrolase activity.

It catalyses the reaction N(4)-(beta-N-acetyl-D-glucosaminyl)-L-asparagine + H2O = N-acetyl-beta-D-glucosaminylamine + L-aspartate + H(+). Its function is as follows. Cleaves the GlcNAc-Asn bond which joins oligosaccharides to the peptide of asparagine-linked glycoproteins. The chain is Putative N(4)-(beta-N-acetylglucosaminyl)-L-asparaginase GE19290 from Drosophila yakuba (Fruit fly).